Here is a 269-residue protein sequence, read N- to C-terminus: NAD-capped RNA hydrolase NudC (269 aa).

Arg-74 serves as a coordination point for substrate. Zn(2+) contacts are provided by Cys-103, Cys-106, Cys-121, and Cys-124. Substrate is bound at residue Tyr-129. The Nudix hydrolase domain maps to Pro-130–Thr-253. Residues Ala-163, Glu-179, and Glu-183 each coordinate a divalent metal cation. Residues Gly-164–Gly-185 carry the Nudix box motif. Residue Gln-197 to Ser-204 coordinates substrate. Glu-224 lines the a divalent metal cation pocket. Ala-246 lines the substrate pocket.

The protein belongs to the Nudix hydrolase family. NudC subfamily. As to quaternary structure, homodimer. The cofactor is Mg(2+). It depends on Mn(2+) as a cofactor. Zn(2+) is required as a cofactor.

The enzyme catalyses a 5'-end NAD(+)-phospho-ribonucleoside in mRNA + H2O = a 5'-end phospho-adenosine-phospho-ribonucleoside in mRNA + beta-nicotinamide D-ribonucleotide + 2 H(+). It carries out the reaction NAD(+) + H2O = beta-nicotinamide D-ribonucleotide + AMP + 2 H(+). It catalyses the reaction NADH + H2O = reduced beta-nicotinamide D-ribonucleotide + AMP + 2 H(+). In terms of biological role, mRNA decapping enzyme that specifically removes the nicotinamide adenine dinucleotide (NAD) cap from a subset of mRNAs by hydrolyzing the diphosphate linkage to produce nicotinamide mononucleotide (NMN) and 5' monophosphate mRNA. The NAD-cap is present at the 5'-end of some mRNAs and stabilizes RNA against 5'-processing. Has preference for mRNAs with a 5'-end purine. Catalyzes the hydrolysis of a broad range of dinucleotide pyrophosphates. This is NAD-capped RNA hydrolase NudC from Vibrio atlanticus (strain LGP32) (Vibrio splendidus (strain Mel32)).